We begin with the raw amino-acid sequence, 154 residues long: Myoglobin (154 aa).

In terms of domain architecture, Globin spans 2-148 (GLSDGEWQLV…FRNDMAAKYK (147 aa)). Serine 4 is modified (phosphoserine). Histidine 65 provides a ligand contact to nitrite. Histidine 65 serves as a coordination point for O2. Phosphothreonine is present on threonine 68. Histidine 94 contributes to the heme b binding site.

This sequence belongs to the globin family. In terms of assembly, monomeric.

The protein localises to the cytoplasm. The protein resides in the sarcoplasm. It catalyses the reaction Fe(III)-heme b-[protein] + nitric oxide + H2O = Fe(II)-heme b-[protein] + nitrite + 2 H(+). The catalysed reaction is H2O2 + AH2 = A + 2 H2O. In terms of biological role, monomeric heme protein which primary function is to store oxygen and facilitate its diffusion within muscle tissues. Reversibly binds oxygen through a pentacoordinated heme iron and enables its timely and efficient release as needed during periods of heightened demand. Depending on the oxidative conditions of tissues and cells, and in addition to its ability to bind oxygen, it also has a nitrite reductase activity whereby it regulates the production of bioactive nitric oxide. Under stress conditions, like hypoxia and anoxia, it also protects cells against reactive oxygen species thanks to its pseudoperoxidase activity. The protein is Myoglobin (MB) of Sapajus apella (Brown-capped capuchin).